We begin with the raw amino-acid sequence, 176 residues long: uncharacterized protein (176 aa).

The signal sequence occupies residues 1–22 (MKYNNIIFLGLCLGLTTYSALS). A disulfide bond links Cys38 and Cys78.

The protein belongs to the fimbrial protein family.

The protein resides in the fimbrium. This is an uncharacterized protein from Escherichia coli (strain K12).